The sequence spans 515 residues: Nectin-1 (515 aa).

Residues 1–30 form the signal peptide; sequence MARMGLAGAAGRWWGLALGLTAFFLPGAHT. Positions 31–141 constitute an Ig-like V-type domain; the sequence is QVVQVNDSMY…GNRESQLNLT (111 aa). The Extracellular segment spans residues 31–355; sequence QVVQVNDSMY…GRRAGQVPTA (325 aa). N-linked (GlcNAc...) asparagine glycosylation is found at Asn36, Asn72, Asn139, Asn202, Asn286, Asn297, Asn307, and Asn332. An intrachain disulfide couples Cys51 to Cys124. 2 consecutive Ig-like C2-type domains span residues 145–243 and 247–334; these read KPTN…TLNV and PEVT…VNIT. Disulfide bonds link Cys172–Cys226 and Cys269–Cys316. The interaction with FGFR stretch occupies residues 282-299; that stretch reads WTTLNGSLPKGVEAQNRT. Residues 356 to 376 traverse the membrane as a helical segment; that stretch reads IIGGVVGSILLVLFVVGGIVV. Residues 377–515 are Cytoplasmic-facing; sequence ALCRRRHTFK…SFISKKEWYV (139 aa). The segment at 400–486 is disordered; that stretch reads YSKAGIPQHH…DGYGDRTLGY (87 aa). Residues Ser422, Ser434, and Ser435 each carry the phosphoserine modification. Tyr436 carries the phosphotyrosine modification. A compositionally biased stretch (acidic residues) spans 436–445; that stretch reads YEEEEEEEGG. A compositionally biased stretch (basic and acidic residues) spans 446–464; that stretch reads GGERKVGGPHPKYDEDAKR. Position 509 is a phosphoserine (Ser509).

The protein belongs to the nectin family. In terms of assembly, (Microbial infection) Interacts with herpes pseudorabies virus/PRV envelope glycoprotein D.

It localises to the cell membrane. It is found in the cell junction. The protein localises to the adherens junction. The protein resides in the presynaptic cell membrane. Its function is as follows. (Microbial infection) Acts as a receptor for herpes simplex virus 1/HHV-1, herpes simplex virus 2/HHV-2, and pseudorabies virus/PRV. In Sus scrofa (Pig), this protein is Nectin-1.